A 171-amino-acid chain; its full sequence is Large ribosomal subunit protein uL10 (171 aa).

It belongs to the universal ribosomal protein uL10 family. As to quaternary structure, part of the ribosomal stalk of the 50S ribosomal subunit. The N-terminus interacts with L11 and the large rRNA to form the base of the stalk. The C-terminus forms an elongated spine to which L12 dimers bind in a sequential fashion forming a multimeric L10(L12)X complex.

In terms of biological role, forms part of the ribosomal stalk, playing a central role in the interaction of the ribosome with GTP-bound translation factors. The polypeptide is Large ribosomal subunit protein uL10 (Methylocella silvestris (strain DSM 15510 / CIP 108128 / LMG 27833 / NCIMB 13906 / BL2)).